The chain runs to 995 residues: Aconitate hydratase 2, mitochondrial (995 aa).

Residues 1–83 constitute a mitochondrion transit peptide; it reads MYRRATSGVR…PASLRAQARN (83 aa). Substrate-binding positions include Gln187 and 306–308; that span reads DSH. [4Fe-4S] cluster-binding residues include Cys538, Cys604, and Cys607. Substrate is bound by residues Arg637, Arg642, Arg800, and 881-882; that span reads SR.

This sequence belongs to the aconitase/IPM isomerase family. As to quaternary structure, monomer. [4Fe-4S] cluster serves as cofactor. In terms of tissue distribution, mostly expressed in roots, leaves and flowers, also present in stems, and, at low levels, in seeds.

Its subcellular location is the mitochondrion. The enzyme catalyses citrate = D-threo-isocitrate. The protein operates within carbohydrate metabolism; tricarboxylic acid cycle; isocitrate from oxaloacetate: step 2/2. Its function is as follows. Catalyzes the isomerization of citrate to isocitrate via cis-aconitate. Contributes to oxidative stress tolerance. Involved in acetate assimilation. This chain is Aconitate hydratase 2, mitochondrial, found in Arabidopsis thaliana (Mouse-ear cress).